The following is a 228-amino-acid chain: Putative NAC domain-containing protein 61 (228 aa).

The NAC domain occupies 5–156 (LSVGFRFYPT…KSGSSRAFDR (152 aa)). Disordered stretches follow at residues 77-96 (ARGG…ATGS) and 166-197 (RNLP…QVDL). Residues 80–89 (GRPSRTTGSG) are compositionally biased toward low complexity. A compositionally biased stretch (polar residues) spans 168–193 (LPSNGVETSSRATISTSPETSHSGGN).

The protein localises to the nucleus. The chain is Putative NAC domain-containing protein 61 (NAC061) from Arabidopsis thaliana (Mouse-ear cress).